A 46-amino-acid chain; its full sequence is Viscotoxin-C1 (46 aa).

3 disulfides stabilise this stretch: Cys-3-Cys-40, Cys-4-Cys-32, and Cys-16-Cys-26.

Monomer.

The protein resides in the secreted. In terms of biological role, thionins are small plant proteins which are toxic to animal cells. They seem to exert their toxic effect at the level of the cell membrane. Their precise function is not known. The sequence is that of Viscotoxin-C1 from Viscum album (European mistletoe).